The following is a 158-amino-acid chain: Endoribonuclease YbeY (158 aa).

Zn(2+) contacts are provided by His119, His123, and Asp129.

The protein belongs to the endoribonuclease YbeY family. It depends on Zn(2+) as a cofactor.

It localises to the cytoplasm. Single strand-specific metallo-endoribonuclease involved in late-stage 70S ribosome quality control and in maturation of the 3' terminus of the 16S rRNA. The polypeptide is Endoribonuclease YbeY (Chlamydia caviae (strain ATCC VR-813 / DSM 19441 / 03DC25 / GPIC) (Chlamydophila caviae)).